The primary structure comprises 298 residues: ATP synthase F(1) complex subunit gamma, mitochondrial (298 aa).

The N-terminal 25 residues, methionine 1 to methionine 25, are a transit peptide targeting the mitochondrion. The residue at position 39 (lysine 39) is an N6-acetyllysine. An N6-succinyllysine modification is found at lysine 49. The residue at position 55 (lysine 55) is an N6-acetyllysine. An N6-acetyllysine; alternate modification is found at lysine 115. Lysine 115 carries the post-translational modification N6-succinyllysine; alternate. An N6-acetyllysine modification is found at lysine 138. Serine 146 is modified (phosphoserine). Position 154 is an N6-acetyllysine; alternate (lysine 154). Lysine 154 carries the N6-succinyllysine; alternate modification. Lysine 197 is modified (N6-acetyllysine). At lysine 270 the chain carries N6-succinyllysine.

The protein belongs to the ATPase gamma chain family. In terms of assembly, component of the ATP synthase complex composed at least of ATP5F1A/subunit alpha, ATP5F1B/subunit beta, ATP5MC1/subunit c (homooctomer), MT-ATP6/subunit a, MT-ATP8/subunit 8, ATP5ME/subunit e, ATP5MF/subunit f, ATP5MG/subunit g, ATP5MK/subunit k, ATP5MJ/subunit j, ATP5F1C/subunit gamma, ATP5F1D/subunit delta, ATP5F1E/subunit epsilon, ATP5PF/subunit F6, ATP5PB/subunit b, ATP5PD/subunit d, ATP5PO/subunit OSCP. ATP synthase complex consists of a soluble F(1) head domain (subunits alpha(3) and beta(3)) - the catalytic core - and a membrane F(0) domain - the membrane proton channel (subunits c, a, 8, e, f, g, k and j). These two domains are linked by a central stalk (subunits gamma, delta, and epsilon) rotating inside the F1 region and a stationary peripheral stalk (subunits F6, b, d, and OSCP). Interacts with FLVCR2; this interaction occurs in the absence of heme and is disrupted upon heme binding.

It is found in the mitochondrion inner membrane. Functionally, subunit gamma, of the mitochondrial membrane ATP synthase complex (F(1)F(0) ATP synthase or Complex V) that produces ATP from ADP in the presence of a proton gradient across the membrane which is generated by electron transport complexes of the respiratory chain. ATP synthase complex consist of a soluble F(1) head domain - the catalytic core - and a membrane F(1) domain - the membrane proton channel. These two domains are linked by a central stalk rotating inside the F(1) region and a stationary peripheral stalk. During catalysis, ATP synthesis in the catalytic domain of F(1) is coupled via a rotary mechanism of the central stalk subunits to proton translocation. In vivo, can only synthesize ATP although its ATP hydrolase activity can be activated artificially in vitro. With the central stalk subunit delta, is essential for the biogenesis of F(1) catalytic part of the ATP synthase complex namely in the formation of F1 assembly intermediate. The chain is ATP synthase F(1) complex subunit gamma, mitochondrial from Mus musculus (Mouse).